The sequence spans 580 residues: Threonine--tRNA ligase (580 aa).

Positions 179–476 (DHRKIGKDLN…LLEQTKGILP (298 aa)) are catalytic. Residues cysteine 272, histidine 323, and histidine 453 each coordinate Zn(2+).

Belongs to the class-II aminoacyl-tRNA synthetase family. In terms of assembly, homodimer. It depends on Zn(2+) as a cofactor.

The protein localises to the cytoplasm. The enzyme catalyses tRNA(Thr) + L-threonine + ATP = L-threonyl-tRNA(Thr) + AMP + diphosphate + H(+). Catalyzes the attachment of threonine to tRNA(Thr) in a two-step reaction: L-threonine is first activated by ATP to form Thr-AMP and then transferred to the acceptor end of tRNA(Thr). Also edits incorrectly charged L-seryl-tRNA(Thr). In Ureaplasma parvum serovar 3 (strain ATCC 27815 / 27 / NCTC 11736), this protein is Threonine--tRNA ligase.